The chain runs to 75 residues: MPITSKYTDEQVEKILAEVGAVLEKHAASPELTLMIAGNIATNVLNQQVAASQRKVIAEKFAQALISSLEVPKAH.

Belongs to the UPF0352 family.

The chain is UPF0352 protein VIBHAR_03027 from Vibrio campbellii (strain ATCC BAA-1116).